Reading from the N-terminus, the 268-residue chain is Ribosomal RNA small subunit methyltransferase A (268 aa).

S-adenosyl-L-methionine is bound by residues asparagine 19, leucine 21, glycine 46, glutamate 67, aspartate 92, and asparagine 113.

This sequence belongs to the class I-like SAM-binding methyltransferase superfamily. rRNA adenine N(6)-methyltransferase family. RsmA subfamily.

It localises to the cytoplasm. The catalysed reaction is adenosine(1518)/adenosine(1519) in 16S rRNA + 4 S-adenosyl-L-methionine = N(6)-dimethyladenosine(1518)/N(6)-dimethyladenosine(1519) in 16S rRNA + 4 S-adenosyl-L-homocysteine + 4 H(+). Its function is as follows. Specifically dimethylates two adjacent adenosines (A1518 and A1519) in the loop of a conserved hairpin near the 3'-end of 16S rRNA in the 30S particle. May play a critical role in biogenesis of 30S subunits. This chain is Ribosomal RNA small subunit methyltransferase A, found in Tolumonas auensis (strain DSM 9187 / NBRC 110442 / TA 4).